The chain runs to 427 residues: BTB/POZ domain-containing protein KCTD16 (427 aa).

Residues 25 to 98 (EVIELNVGGQ…LRDRQVVLPD (74 aa)) enclose the BTB domain. A Phosphotyrosine modification is found at Tyr112. Ser130, Ser137, Ser143, and Ser146 each carry phosphoserine.

In terms of assembly, homopentamer; forms an open pentamer. In contrast to other BTB domain-containing proteins, does not interact with CUL3. Interacts as a tetramer with GABBR1 and GABBR2. In terms of tissue distribution, expressed in the brain, mainly in the hippocampus.

It localises to the presynaptic cell membrane. It is found in the postsynaptic cell membrane. In terms of biological role, auxiliary subunit of GABA-B receptors that determine the pharmacology and kinetics of the receptor response. Increases agonist potency and markedly alter the G-protein signaling of the receptors by accelerating onset and promoting desensitization. This Mus musculus (Mouse) protein is BTB/POZ domain-containing protein KCTD16 (Kctd16).